The primary structure comprises 199 residues: MSDMRSPSQGLNLTDSVYERLLSERIIFLGSEVNDDVANRLCAQILLLAAEDPTKDISLYINSPGGSISAGMAIYDTMVLAPCDIATYAMGMAASMGEFLLAAGTKGKRYALPHARILMHQPLGGVTGSAADIAIQAEQFHVIKKEMFRLNAEFTGQSIERIEADSDRDRWFTAQEALEYGFVDHIITRAATITNGEAQ.

The Nucleophile role is filled by S95. H120 is an active-site residue.

It belongs to the peptidase S14 family. Fourteen ClpP subunits assemble into 2 heptameric rings which stack back to back to give a disk-like structure with a central cavity, resembling the structure of eukaryotic proteasomes.

The protein localises to the cytoplasm. It catalyses the reaction Hydrolysis of proteins to small peptides in the presence of ATP and magnesium. alpha-casein is the usual test substrate. In the absence of ATP, only oligopeptides shorter than five residues are hydrolyzed (such as succinyl-Leu-Tyr-|-NHMec, and Leu-Tyr-Leu-|-Tyr-Trp, in which cleavage of the -Tyr-|-Leu- and -Tyr-|-Trp bonds also occurs).. In terms of biological role, cleaves peptides in various proteins in a process that requires ATP hydrolysis. Has a chymotrypsin-like activity. Plays a major role in the degradation of misfolded proteins. The sequence is that of ATP-dependent Clp protease proteolytic subunit 2 from Mycolicibacterium paratuberculosis (strain ATCC BAA-968 / K-10) (Mycobacterium paratuberculosis).